Consider the following 207-residue polypeptide: Redox-sensing transcriptional repressor Rex (207 aa).

A DNA-binding region (H-T-H motif) is located at residues Ile17 to Phe56. Gly91–Gly96 is an NAD(+) binding site.

Belongs to the transcriptional regulatory Rex family. Homodimer.

It is found in the cytoplasm. Modulates transcription in response to changes in cellular NADH/NAD(+) redox state. In Brevibacillus brevis (strain 47 / JCM 6285 / NBRC 100599), this protein is Redox-sensing transcriptional repressor Rex.